A 3390-amino-acid chain; its full sequence is MSEKTQTFVQNETHVLDMTSDFKSDLSLEKVTSSVEQTDDLVSKIINNNDLDIKDLSFLRNLLLSTLQYLGIAKFVAINITLSILSILMLLINSCAKFTRIVNLSSHILNIITTLGLYFQVSSMEIEEITQTFENEFGTYDDDKILSHYIKICNLPNRKDVYEYISLNDLKYKIKLPDISFYELKNDILSKNKNLHLWIFQKFTDEFLAMWFGVQPYRISNLREMLVISRQGFIPKDLFNEIRKLCNMGVSVIISFIQSKLFDEPFKKRDCTQALKDASVISSPFDTLWNLISKQVCDNSAEERFTQTILDFTSEFDNFLGIPNYKFAKNQKLVNTISKSLDACAKFIRDCPKDKQTEIFPLQGLHTATVKRRNEILTNVMPKFARQEPFVVLFQGPGGIGKTHLVQQLATKCVNSFYQDHEDDYIEISPDDKYWPPLSGQRVAFFDEAGNLNDLTEDLLFRNIKSICSPAYFNCAAADIEHKISPCPFELVFATVNTDLDTLQSKISSTFGQASVFPIWRRCIVVECSWNEKELGPFNYKNPSGHRSDYSHITMNYMSYDDKTQKLALEKEINFDTLFDMIRLRFRKKQQEHDTKISILNNEIQRQSNSKQHFSVCLYGEPGQGKTYNLNKLITTFANATNLKIGSEEKPSIHIFDDYIKDENDENCSKFMDIYNNKLPNNSVIFSATNVYPKTHFFPTFFLTNLIYAFIQPFKQVGLYRRLGFDGYTDIPNSSVNAPIFVQNFKFYERKQHICYFLSLEFLKNIICYIFFFLYFPLKFIKKIDLIEIKDVNKYVYDRYINFLSLSKQIEIVEYPPNLENVEFDFRFNMNKFHRVSFNNPFELDKYIHFNKNSYENLLHFDWKMYLSPRVKHRLALSYEKFFITISEVNKEIIIEELKRYVLLFKQFNIDPNMEINLGEYGSFYYINGKIHLMTINIESNVSEIPVFTDGDYVYISEHKIPVIDLFDNININSKYNLSFDQSIALNSFKTGDSFYSNAKVRKSLSKFVLLNYQTKFKLYLKEAKDKVKNFIETPIGHLLSILLTIFVICYASFKIYSKFSNFFSKDQAIEDQRKGEKKIKKITNYDSDGVQPQRKGEKKIKKVTNYDSDGVQPQSNVKVEEEIKLVFDPTGQKLLFGNDFTSELETLVELEKDDEEFTKSKIDNKSMAGLRREVRRRRYARSKKAQIEKQEVLTLPDVNGFEGGKPYFQIAEEKARKNLCQIYMIANNENCIASKFSDHIVCYGLFVFKKRLASVGHIVEALKCAPGYNLYAGCDQFNGKLYKMNLVRNYRKRELSVWDVDCPNDFVDLTSFFIPKEELYDAENCNTVLGRFGMNKREVYLYGNCEFIQEFFKVDNKGAQEFGYIDWATVDITLTTGGDCGLPYYICERKKFHNKIMGLHFAGNNVNHKTIGMSALIYKEDLVVWKGAERQSKCKFCDVKDIIIAQPDIPKEKYKGYNHEIVWNSLHESSPTTLNEELEHYLNIFPKFTGTIIKHSGDKFYGSVKHSHTQFISKFKTELTVTNGWKLSTAGDCQFESNHISPNTEVMYRVVDVQFNSIFKAFKSQPYIKNFRLIANVYEKDGKQRVTILTIIPVSDFNVKQQTVRQALVPLHLNEDEEVYVTEDVSDIFKTAIKRKQRGILPDVPYETVENETVEILGITHRNMTPEPAQMYKPTPFYKLALKFNLDHKLPVNFNMKDCPQEQKDMMVLDRLGQPNPRITQSLKWAHKDYSPDYELRKYVKEQYMCNIMEYYAGCNLLTEEQILKGYGPNHRLYGALGGMEIDSSIGWTMKELYRVTKKSDVINLDSNGNYSFLNNEAAQYTQELLKISMEQAHNGQRYYTAFNELMKMEKLKPSKNFIPRTFTAQDLNGVLMERWILGEFTARALAWDENCAVGCNPYATFHKFATKFFKFKNFFSCDYKNFDRTIPKCVFEDFRDMLIQANPHMKNEIYACFQTIIDRIQVSGNSILLVHGGMPSGCVPTAPLNSKVNDIMIYTAYVNILRRADRGDITSYRYYRDLVCRLFYGDDVIIAVDDSIADIFNCQTLSEEMKILFGMNMTDGSKSDIIPKFETIETLSFISRFFRPLKHQENFIVGALKKISIQTHFYYATDDTPEHFGQVFKTIQEEAALWEEEYFNKIQSYIQEIIRKFPEISKFFNFESYKSIQKRYIMNGWNEFVKLEKLDLNLNKKKSSKVTGIHSKQYSKFLKFLSRIENEKAALEGNFNKESVNTWYFKMSKAMHLNEIFQKGLISKPLAEFYFNEGQKMWDCNITFRRSKDDLPFTFSGSGTTKACAREQAAEEALVLFSQEDEIVRQINDIQSDCKFCKKMIRYKKLLSGVSIQRQMNVSKITENHVPSAGMMATDPSVAPDSGIATNTQTPSISRVLNPIARALDNPAGTGAPFDKHTYVYNVFTRWPEMSTVVNKSLAAGAEVFKISLDPNKLPKRILQYIQFHKTIIPQIEVQILIGGAAGTVGWLKVGWVPDASTAKKYSLDDLQLVASETINLNSTITMSMIINDSRRNGMFRLTKSDPEPWPGIVCLVEHPITNVQRNDDVNYPVIVSVRLGPDCQLMQPYNDLNLSGGTDPDPDPEPDPDPEPGPDPEPGVDELDLSKYIPNQLIDLLICNSYVPNNVSVDFLSTYPNLNFSIHNITDVVVSSKPYTLALFETESQINSASVWRGDLTQLSVFIQYKFYTRVEAYNKVTTVHTDKWTPNFDGTVYKPVDVKIEHAYGTYELTTMWLTSYGLVMEWSLDESRVFYGTYKTDSNGRRWLIDGNTPIARSDHCFIVSSPDLLSDDKAYYNNPIGAKQGGKLVDGAQIYRIFKTESGGYRSDPFVPETYWPSETPYNADWSGVKMPYQIRKVIQTGNNLAGKHLDGDLKMCAMIRQGSSSTQSTDNYFYPIYVHNFSALLKQMNLILKERKTKYIKFDLQVGGKPFAQMGFGDGAFIGRTTMFRQIRAAITNVILLKNIVGVDDLSGLQALPTSGFADWVVKAQSTNSKFLNDFYNDKISIERQASLGIAAAIGAGQGLFGGLSAQWQWQQQADWSRQMQRERLDMMEKLANINNQARLNQLTQSGAQQRITQQAAYQQQMNALGAGSVSAQNGMYTPSNYTPLPSYKSNTTNYYNNSVYHTDNNITNNPSNTSLTNNINNFNPELFQQQRERMPTPSEAYDNSKGFVPQPGTSKSIATENINPNYKDEEHIYEPIEQQNHEYADIDYNAMNISRENKNSSNFGNVGILDHQYADIDYDAMKIARDQQNSSKFGNVGVLNHQYAELDFSKNNTRKNSQILDNSLYSKTQPSSKMIDNSLYGINPNKMVENQNYEPASMERKNSIYSSNLNSSNNLKFNNIPNFKGPTNLNISGAKPAGFGSGIIQPAINKYTDFSKPN.

The SF3 helicase domain occupies 369 to 543 (TVKRRNEILT…ELGPFNYKNP (175 aa)). 396-403 (GPGGIGKT) serves as a coordination point for ATP. A Peptidase C3 domain is found at 1206 to 1423 (KPYFQIAEEK…MSALIYKEDL (218 aa)). Residues His-1258, Glu-1295, and Cys-1381 each act as for 3C-like protease activity in the active site. The RdRp catalytic domain occupies 1914-2042 (KNFFSCDYKN…AVDDSIADIF (129 aa)). Met-2346 is modified (N-acetylmethionine; by host). Disordered regions lie at residues 2576–2609 (YNDLNLSGGTDPDPDPEPDPDPEPGPDPEPGVDE) and 3168–3190 (TPSEAYDNSKGFVPQPGTSKSIA). A compositionally biased stretch (acidic residues) spans 2587–2609 (PDPDPEPDPDPEPGPDPEPGVDE).

N-acetylated. Post-translationally, proteolytic cleavages of the polyprotein yield mature proteins.

The protein localises to the virion. The enzyme catalyses RNA(n) + a ribonucleoside 5'-triphosphate = RNA(n+1) + diphosphate. The catalysed reaction is ATP + H2O = ADP + phosphate + H(+). In terms of biological role, assembles with VP1 and VP2 to form an icosahedral capsid. VP1 is about 5 time more abundant than VP1-FSD in the virion. Its function is as follows. Assembles with VP1 and VP1-FSD to form an icosahedral capsid. Functionally, replicates genomic and antigenomic RNA. The protein is Polyprotein-FSD of Solenopsis invicta (Red imported fire ant).